The chain runs to 94 residues: Co-chaperonin GroES (94 aa).

The protein belongs to the GroES chaperonin family. In terms of assembly, heptamer of 7 subunits arranged in a ring. Interacts with the chaperonin GroEL.

The protein resides in the cytoplasm. Together with the chaperonin GroEL, plays an essential role in assisting protein folding. The GroEL-GroES system forms a nano-cage that allows encapsulation of the non-native substrate proteins and provides a physical environment optimized to promote and accelerate protein folding. GroES binds to the apical surface of the GroEL ring, thereby capping the opening of the GroEL channel. This is Co-chaperonin GroES from Thermoanaerobacter pseudethanolicus (strain ATCC 33223 / 39E) (Clostridium thermohydrosulfuricum).